Reading from the N-terminus, the 967-residue chain is MTSCILAGSLETTPKVSPGDPEAKPLIFTFVPTLRRLPTHIQLADTSKFLVKIPEEPTDKSPETVNRFEYSDHMTFSSESKQERVQRILDYPSEVSGRNSQQKEFNTKEPQGMQKGDLFKAEYVFIVDSDGEDEATCRQGEQGPPGGPGNIATRPKSLAISSSLASDVVRPKVRGADLKTSSHPEIPHGIAPQQKHGLLISPTTSEQLAHKPPAFSFVSPTNQKTPPVPANVSGATVLREFHTRRLDVTGASEEETTTYFHSTAHDSPLSAWKGASTLVVSPSAQLSGSSLCGSNVTDHTRGLASEAQKKMSTSNVLNPKEDVRTCPAPASGASLTSPSASYIPVRIVMHSLSPSPKPLTSSSHGSLSTVCSQMSSSGSLSKSGLKSPVPSRLSLLTAILKSNPSHQRPLSPASCPTFSLNSLASSTLALDQKVKQTPPTSKKSLSSGSLTTGSTEQEHQASAASYQPCHLPFFSKTTPLSQAQPLSPLALASNSCASMDIEKIPGSTLRSNTTSPQPQTDTFSLADVPSVTPVLSPLSSSKGRKDGDSRTPEKNRNICIQPSTLASTPPVDESLALSSSGKGFHPSPALSDLIDRSKRACSQQHPGQRPSPSALPTPPVSRAASASHPHLGCSILPLQSSLTQTLQPSPSALRPSCGSATCPSRTQMPENTASNHSSRVSTPSLPVSLTRTKELFSPCALSMSAGPENKKPKQYKTMSSYKAFAAIPTNTLLLEQKALDEPARTESNSKASVLDLPVEFCFPAQLRQQTEELCATIDKVLQDSLSMHSSDSPSRPPQTMLGSETIKTPTTHPRAAGRETKYANLSSSSSTASESQLTKPGVIRPVPVKSKLLLRKDEEVYEPNPFSKYLEDNSGLFSEQDMAIPHKPVSLHPLYQSKLYPPAKSLLHPQTLSHADCLTPGSFSHLSSFSVRDEQEKSPTLLSQDTYNKLGHPMVTIPEHDTLDSKE.

Phosphoserine is present on Ser-129. Disordered regions lie at residues 132 to 154 (EDEATCRQGEQGPPGGPGNIATR), 302 to 336 (GLASEAQKKMSTSNVLNPKEDVRTCPAPASGASLT), 432 to 462 (QKVKQTPPTSKKSLSSGSLTTGSTEQEHQAS), 506 to 628 (GSTL…SASH), 644 to 685 (QTLQ…TPSL), 786 to 838 (SMHS…SQLT), and 929 to 967 (FSVRDEQEKSPTLLSQDTYNKLGHPMVTIPEHDTLDSKE). Positions 144–811 (PPGGPGNIAT…GSETIKTPTT (668 aa)) are required for interaction with ISL1. Residues 437-455 (TPPTSKKSLSSGSLTTGST) show a composition bias toward low complexity. Residues 508–523 (TLRSNTTSPQPQTDTF) are compositionally biased toward polar residues. Residues 528–541 (VPSVTPVLSPLSSS) show a composition bias toward low complexity. The span at 543 to 556 (GRKDGDSRTPEKNR) shows a compositional bias: basic and acidic residues. Composition is skewed to polar residues over residues 558–567 (ICIQPSTLAS) and 658–685 (GSATCPSRTQMPENTASNHSSRVSTPSL). A Phosphoserine modification is found at Ser-792. Polar residues predominate over residues 800 to 811 (MLGSETIKTPTT). The span at 826–835 (SSSSSTASES) shows a compositional bias: low complexity. A compositionally biased stretch (polar residues) spans 938-947 (SPTLLSQDTY). The segment covering 958-967 (PEHDTLDSKE) has biased composition (basic and acidic residues).

Directly interacts with LMNA. Interacts with ISL1 (via N-terminal domain); the interaction represses ISL1 transactivator activity. Interactions of ISL1 with MLIP1 and GCN5/KAT2A may be mutually exclusive. May be ubiquitinated by UBE3C ubiquitin ligase; ubiquitination is followed by protein degradation. As to expression, predominantly expressed in the heart and skeletal muscle, but detected at lower levels in the lung and brain (at protein level). Also detected in smooth muscle, thymus and kidney. In brain, expressed by a subpopulation of cells within the hippocampus and cortex. In heart, expressed by cardiomyocytes. Expression is reduced in hypertrophic hearts at the transcript level. However, expression in hypertrophic hearts induced by transverse aortic constriction do not differ from control at the protein level.

The protein localises to the nucleus. Its subcellular location is the nucleus envelope. It is found in the PML body. The protein resides in the cytoplasm. It localises to the cytosol. The protein localises to the cell membrane. Its subcellular location is the sarcolemma. Required for myoblast differentiation into myotubes, possibly acting as a transcriptional regulator of the myogenic program. Required for cardiac adaptation to stress through integrated regulation of the AKT/mTOR pathways and FOXO1. Regulates cardiac homeostasis and plays a role in the protection against cardiac hypertrophy. Binds chromatin. May act as a transcriptional cofactor for ISL1, repressing its transcriptional activity. May also repress MYOCD transcriptional activity. This chain is Muscular LMNA-interacting protein, found in Mus musculus (Mouse).